The chain runs to 242 residues: MLRNLLLRLSKLLLWLIALSVLLVLLLRWVPPPFTALMIERKIESWRTGEAIDLTREWRPWRELPDDLKMAVIAAEDQKFADHWGFDVAAIRAALSHNERGGSLRGASTLSQQVAKNLFLWSGRSWPRKGLEAWFTALIELMWPKQRILEVYLNSVEWGDGIFGAQAAAQHHFGTGAPYLSAHQASLLAAVLPNPRQWSAGKPSRYVNNRAAWIRQQMRQLGGSHYLQRIKPNHPEWWPSWL.

Residues 12 to 32 (LLLWLIALSVLLVLLLRWVPP) form a helical membrane-spanning segment.

It belongs to the glycosyltransferase 51 family.

The protein resides in the cell inner membrane. The enzyme catalyses [GlcNAc-(1-&gt;4)-Mur2Ac(oyl-L-Ala-gamma-D-Glu-L-Lys-D-Ala-D-Ala)](n)-di-trans,octa-cis-undecaprenyl diphosphate + beta-D-GlcNAc-(1-&gt;4)-Mur2Ac(oyl-L-Ala-gamma-D-Glu-L-Lys-D-Ala-D-Ala)-di-trans,octa-cis-undecaprenyl diphosphate = [GlcNAc-(1-&gt;4)-Mur2Ac(oyl-L-Ala-gamma-D-Glu-L-Lys-D-Ala-D-Ala)](n+1)-di-trans,octa-cis-undecaprenyl diphosphate + di-trans,octa-cis-undecaprenyl diphosphate + H(+). Its pathway is cell wall biogenesis; peptidoglycan biosynthesis. Its function is as follows. Peptidoglycan polymerase that catalyzes glycan chain elongation from lipid-linked precursors. This is Biosynthetic peptidoglycan transglycosylase from Stutzerimonas stutzeri (strain A1501) (Pseudomonas stutzeri).